A 431-amino-acid polypeptide reads, in one-letter code: MFFGGKGSLTYTLVIICFLTLRLAASQNCLNKSLEDVVIDIQSSLSKGIRGNEPIYTSTQEDCINSCCSTKIISGDKACNFMIFDTRKIARRPNCYLFFCPNEEACPLKPAKGLRSYRIIRDFPSLTRNLPSQELPQEDSLLPGQFSQAVTPLARHHIVYSKPTDISWRETLPQKFGSSDHLEKLFNMDKASAQLLVYKEKGHSQSSQISSDQEIAHLLPENVSVFPATVAVASPHTTSATPKPAIRLPTNASVTPSGTSQPQLATTSPPVTTVTSQPPTTLISTGFTRAVATLQAMATTAVLTTTFQAPTDLKGSLETIPFTEISNLTLNTGNVYNPTALSMSNVKSSATNKTASWEGREASPGRSSQGNVPENQYGLPFEKWLLIGSLLFGVLFLVIGLVLLGRILSESLRRKRYSRLDYLINGIYVDI.

The first 26 residues, 1 to 26, serve as a signal peptide directing secretion; the sequence is MFFGGKGSLTYTLVIICFLTLRLAAS. At 27–385 the chain is on the extracellular side; that stretch reads QNCLNKSLED…QYGLPFEKWL (359 aa). A glycan (N-linked (GlcNAc...) asparagine) is linked at N31. Residues 33 to 117 enclose the MANSC domain; sequence SLEDVVIDIQ…LKPAKGLRSY (85 aa). N222 and N251 each carry an N-linked (GlcNAc...) asparagine glycan. Residues 236-279 are disordered; sequence HTTSATPKPAIRLPTNASVTPSGTSQPQLATTSPPVTTVTSQPP. A compositionally biased stretch (polar residues) spans 250 to 265; the sequence is TNASVTPSGTSQPQLA. Residues 266–279 show a composition bias toward low complexity; sequence TTSPPVTTVTSQPP. Residues N327 and N352 are each glycosylated (N-linked (GlcNAc...) asparagine). Residues 352–372 form a disordered region; it reads NKTASWEGREASPGRSSQGNV. Residues 386–408 traverse the membrane as a helical segment; that stretch reads LIGSLLFGVLFLVIGLVLLGRIL. The Cytoplasmic portion of the chain corresponds to 409–431; sequence SESLRRKRYSRLDYLINGIYVDI.

The protein resides in the membrane. The chain is MANSC domain-containing protein 1 (MANSC1) from Macaca fascicularis (Crab-eating macaque).